A 170-amino-acid chain; its full sequence is Acireductone dioxygenase (170 aa).

Positions 99, 101, 105, and 144 each coordinate Fe(2+). Positions 99, 101, 105, and 144 each coordinate Ni(2+).

This sequence belongs to the acireductone dioxygenase (ARD) family. Monomer. Fe(2+) is required as a cofactor. The cofactor is Ni(2+).

The catalysed reaction is 1,2-dihydroxy-5-(methylsulfanyl)pent-1-en-3-one + O2 = 3-(methylsulfanyl)propanoate + CO + formate + 2 H(+). It carries out the reaction 1,2-dihydroxy-5-(methylsulfanyl)pent-1-en-3-one + O2 = 4-methylsulfanyl-2-oxobutanoate + formate + 2 H(+). It functions in the pathway amino-acid biosynthesis; L-methionine biosynthesis via salvage pathway; L-methionine from S-methyl-5-thio-alpha-D-ribose 1-phosphate: step 5/6. In terms of biological role, catalyzes 2 different reactions between oxygen and the acireductone 1,2-dihydroxy-3-keto-5-methylthiopentene (DHK-MTPene) depending upon the metal bound in the active site. Fe-containing acireductone dioxygenase (Fe-ARD) produces formate and 2-keto-4-methylthiobutyrate (KMTB), the alpha-ketoacid precursor of methionine in the methionine recycle pathway. Ni-containing acireductone dioxygenase (Ni-ARD) produces methylthiopropionate, carbon monoxide and formate, and does not lie on the methionine recycle pathway. This chain is Acireductone dioxygenase, found in Bacillus cereus (strain ATCC 10987 / NRS 248).